Here is a 249-residue protein sequence, read N- to C-terminus: dTDP-4-amino-2,3,4,6-tetradeoxy-D-glucose N,N-dimethyltransferase (249 aa).

Arg-30 provides a ligand contact to substrate. S-adenosyl-L-methionine contacts are provided by residues Ala-59, Glu-80, and 102–103; that span reads DI. Residues Thr-165, 178-182, and Arg-241 contribute to the substrate site; that span reads RLSHS.

Belongs to the methyltransferase TylM1/DesVI family. Homodimer. Mg(2+) serves as cofactor.

It catalyses the reaction dTDP-4-amino-2,3,4,6-tetradeoxy-alpha-D-erythro-hexopyranose + 2 S-adenosyl-L-methionine = dTDP-alpha-D-forosamine + 2 S-adenosyl-L-homocysteine + 2 H(+). Functionally, involved in the biosynthesis of forosamine ((4-dimethylamino)-2,3,4,6-tetradeoxy-alpha-D-threo-hexopyranose), a highly deoxygenated sugar component of several bioactive natural products such as the insecticidal spinosyns A and D. Catalyzes the dimethylation of the C-4 amino group from dTDP-4-amino-2,3,4,6-tetradeoxy-alpha-D-glucose to yield dTDP-D-forosamine. In Saccharopolyspora spinosa, this protein is dTDP-4-amino-2,3,4,6-tetradeoxy-D-glucose N,N-dimethyltransferase.